The sequence spans 148 residues: UPF0756 membrane protein NMC1845 (148 aa).

Helical transmembrane passes span 13-35 (LILL…LLLM), 50-70 (HGLN…LVSG), 80-100 (FLNF…WLAG), and 121-141 (VIGV…AGIL).

The protein belongs to the UPF0756 family.

The protein resides in the cell membrane. This chain is UPF0756 membrane protein NMC1845, found in Neisseria meningitidis serogroup C / serotype 2a (strain ATCC 700532 / DSM 15464 / FAM18).